The following is a 467-amino-acid chain: Na(+)/H(+) exchange regulatory cofactor-like protein nrfl-1 (467 aa).

2 consecutive PDZ domains span residues Arg12–Glu94 and Leu143–Asp225. The tract at residues Met344–Asp429 is disordered. The segment covering Pro407 to Gly425 has biased composition (polar residues).

In terms of assembly, interacts (via PDZ 2 domain) with aat-6 (via PDZ-binding motif); the interaction sequesters aat-6 to the apical cell membrane of intestinal cells. Phosphorylated. Expressed in the excretory canal and intestine. Expressed on the apical cell membrane of intestinal cells (at protein level).

It is found in the cell projection. It localises to the microvillus membrane. The protein resides in the apical cell membrane. Functionally, scaffold protein that connects plasma membrane proteins with members of the ezrin/moesin/radixin family and thereby helps to link them to the actin cytoskeleton and to regulate their surface expression. Anchors the amino acid transporter protein aat-6 to the apical cell membrane of intestinal cells, particularly in older animals, in order to maintain amino acid homeostasis. May play a role in promoting fertility. This chain is Na(+)/H(+) exchange regulatory cofactor-like protein nrfl-1, found in Caenorhabditis elegans.